A 506-amino-acid polypeptide reads, in one-letter code: Protein spinster homolog 1 (506 aa).

A disordered region spans residues 1–42 (MSQADADITPFFADDNEGEGPVENGVGSPLPEDEEEESPSGV). Positions 21–30 (PVENGVGSPL) are enriched in low complexity. The next 12 membrane-spanning stretches (helical) occupy residues 52–71 (IVLC…VAGV), 87–107 (GLLQ…FGYL), 115–135 (LIMC…SFIG), 149–169 (VGVG…DLFV), 176–196 (MLSI…IVGS), 207–227 (WALR…MLVV), 266–286 (FGFT…PAFL), 310–330 (LIFG…GVQA), 344–364 (LVCA…IMFA), 373–393 (VFIF…ADIL), 408–428 (FQIV…IGVV), and 450–470 (LLCS…AVFI).

This sequence belongs to the major facilitator superfamily. Spinster (TC 2.A.1.49) family. As to expression, expressed in yolk cells.

The protein resides in the lysosome membrane. The catalysed reaction is a 1-acyl-sn-glycero-3-phosphocholine(out) + H(+)(out) = a 1-acyl-sn-glycero-3-phosphocholine(in) + H(+)(in). The enzyme catalyses a 1-acyl-sn-glycero-3-phosphoethanolamine(out) + H(+)(out) = a 1-acyl-sn-glycero-3-phosphoethanolamine(in) + H(+)(in). It carries out the reaction a 1-O-(1Z-alkenyl)-sn-glycero-3-phosphocholine(out) + H(+)(out) = a 1-O-(1Z-alkenyl)-sn-glycero-3-phosphocholine(in) + H(+)(in). It catalyses the reaction a 1-O-(1Z-alkenyl)-sn-glycero-3-phosphoethanolamine(out) + H(+)(out) = a 1-O-(1Z-alkenyl)-sn-glycero-3-phosphoethanolamine(in) + H(+)(in). Mediates the rate-limiting, proton-dependent, lysosomal efflux of lysophospholipids. Selective for zwitterionic headgroups such as lysophosphatidylcholine (LPC) and lysophosphatidylethanolamine (LPE). Essential player in lysosomal homeostasis. Critical for embryogenesis. Involved in the regulation of developmental senescence. This Danio rerio (Zebrafish) protein is Protein spinster homolog 1 (spns1).